Consider the following 1081-residue polypeptide: DNA polymerase catalytic subunit (1081 aa).

The protein belongs to the DNA polymerase type-B family. In terms of assembly, forms a complex with the ssDNA-binding protein UL29, the DNA polymerase processivity factor, and the alkaline exonuclease. Interacts with the putative helicase-primase complex subunit UL8; this interaction may coordinate leading and lagging strand DNA synthesis at the replication fork.

Its subcellular location is the host nucleus. The catalysed reaction is DNA(n) + a 2'-deoxyribonucleoside 5'-triphosphate = DNA(n+1) + diphosphate. It catalyses the reaction Endonucleolytic cleavage to 5'-phosphomonoester.. Functionally, replicates viral genomic DNA. The replication complex is composed of six viral proteins: the DNA polymerase, processivity factor, primase, primase-associated factor, helicase, and ssDNA-binding protein. Additionally, the polymerase contains an intrinsic ribonuclease H (RNase H) activity that specifically degrades RNA/DNA heteroduplexes or duplex DNA substrates in the 5' to 3' direction. Therefore, it can catalyze the excision of the RNA primers that initiate the synthesis of Okazaki fragments at a replication fork during viral DNA replication. This chain is DNA polymerase catalytic subunit (UL30), found in Psittacid herpesvirus 1 (isolate Amazon parrot/-/97-0001/1997) (PsHV-1).